Here is a 188-residue protein sequence, read N- to C-terminus: Acireductone dioxygenase (188 aa).

Residues His-97, His-99, Glu-103, and His-141 each contribute to the Fe(2+) site. 4 residues coordinate Ni(2+): His-97, His-99, Glu-103, and His-141.

Belongs to the acireductone dioxygenase (ARD) family. Monomer. It depends on Fe(2+) as a cofactor. The cofactor is Ni(2+).

The catalysed reaction is 1,2-dihydroxy-5-(methylsulfanyl)pent-1-en-3-one + O2 = 3-(methylsulfanyl)propanoate + CO + formate + 2 H(+). It carries out the reaction 1,2-dihydroxy-5-(methylsulfanyl)pent-1-en-3-one + O2 = 4-methylsulfanyl-2-oxobutanoate + formate + 2 H(+). Its pathway is amino-acid biosynthesis; L-methionine biosynthesis via salvage pathway; L-methionine from S-methyl-5-thio-alpha-D-ribose 1-phosphate: step 5/6. In terms of biological role, catalyzes 2 different reactions between oxygen and the acireductone 1,2-dihydroxy-3-keto-5-methylthiopentene (DHK-MTPene) depending upon the metal bound in the active site. Fe-containing acireductone dioxygenase (Fe-ARD) produces formate and 2-keto-4-methylthiobutyrate (KMTB), the alpha-ketoacid precursor of methionine in the methionine recycle pathway. Ni-containing acireductone dioxygenase (Ni-ARD) produces methylthiopropionate, carbon monoxide and formate, and does not lie on the methionine recycle pathway. This chain is Acireductone dioxygenase, found in Gluconobacter oxydans (strain 621H) (Gluconobacter suboxydans).